Consider the following 349-residue polypeptide: ALA-interacting subunit 3 (349 aa).

The segment covering M1–A21 has biased composition (low complexity). The interval M1–Y30 is disordered. Residue S2 is modified to N-acetylserine. Residues V50–F70 traverse the membrane as a helical segment. Residues N181, N190, and N223 are each glycosylated (N-linked (GlcNAc...) asparagine). Residues L305 to I325 traverse the membrane as a helical segment.

This sequence belongs to the CDC50/LEM3 family. As to quaternary structure, interacts with ALA2 and ALA3 in a heterologous system. In terms of tissue distribution, expressed in roots, leaves, stems, flowers and siliques.

It localises to the golgi apparatus membrane. The protein localises to the prevacuolar compartment membrane. Its subcellular location is the endoplasmic reticulum membrane. Functionally, required for the lipid transport activity of the ALA/ALIS P4-ATPase complex. This Arabidopsis thaliana (Mouse-ear cress) protein is ALA-interacting subunit 3 (ALIS3).